The chain runs to 121 residues: Conopressin-conophysin (121 aa).

The first 20 residues, methionine 1–alanine 20, serve as a signal peptide directing secretion. A disulfide bridge links cysteine 21 with cysteine 26. Proline 27 bears the 4-hydroxyproline; partial; in Conopressin-ba1c mark. A Glycine amide modification is found at glycine 29. Intrachain disulfides connect cysteine 43/cysteine 83, cysteine 46/cysteine 57, cysteine 51/cysteine 73, cysteine 58/cysteine 63, cysteine 90/cysteine 108, cysteine 102/cysteine 120, and cysteine 109/cysteine 114.

It belongs to the vasopressin/oxytocin family. As to expression, expressed by the venom duct.

It localises to the secreted. This Conus bayani (Bayan's cone) protein is Conopressin-conophysin.